Reading from the N-terminus, the 173-residue chain is Photosystem I assembly protein Ycf3 (173 aa).

3 TPR repeats span residues 35–68 (AFVYYRDGMSAQADGEYKEALDNYYEALKLEDDA), 72–105 (SYILYNIGIIHGSNGEHERALEYYHEAIELNPNL), and 120–153 (GERAKEEGREDESEALFDKAAEYWKQAIRLAPNN).

Belongs to the Ycf3 family.

It localises to the cellular thylakoid membrane. In terms of biological role, essential for the assembly of the photosystem I (PSI) complex. May act as a chaperone-like factor to guide the assembly of the PSI subunits. This chain is Photosystem I assembly protein Ycf3, found in Gloeothece citriformis (strain PCC 7424) (Cyanothece sp. (strain PCC 7424)).